The chain runs to 90 residues: Small ribosomal subunit protein bS20 (90 aa).

Residues 1-27 (MANSAQAKKRARQNEKRELHNASQRSA) form a disordered region.

Belongs to the bacterial ribosomal protein bS20 family.

Functionally, binds directly to 16S ribosomal RNA. This Coxiella burnetii (strain CbuK_Q154) (Coxiella burnetii (strain Q154)) protein is Small ribosomal subunit protein bS20.